We begin with the raw amino-acid sequence, 394 residues long: Putative FNIP repeat-containing protein R636 (394 aa).

FNIP repeat units follow at residues 126 to 167 (FNKS…FSVY), 168 to 207 (FDQP…LYFG), and 210 to 250 (FNQP…IFEA).

The protein is Putative FNIP repeat-containing protein R636 of Acanthamoeba polyphaga mimivirus (APMV).